The following is a 59-amino-acid chain: Antitoxin Rv0909 (59 aa).

Antitoxin component of a type II toxin-antitoxin (TA) system. Upon expression in M.smegmatis neutralizes the effect of cognate toxin Rv0910. This chain is Antitoxin Rv0909, found in Mycobacterium tuberculosis (strain ATCC 25618 / H37Rv).